Reading from the N-terminus, the 240-residue chain is Uridylate kinase (240 aa).

Lysine 13 to glycine 16 contacts ATP. Positions glycine 21–glycine 26 are involved in allosteric activation by GTP. Glycine 55 lines the UMP pocket. Residues glycine 56 and arginine 60 each coordinate ATP. UMP is bound by residues aspartate 75 and threonine 137–threonine 144. Residues threonine 164, tyrosine 170, and aspartate 173 each coordinate ATP.

It belongs to the UMP kinase family. As to quaternary structure, homohexamer.

It localises to the cytoplasm. It carries out the reaction UMP + ATP = UDP + ADP. Its pathway is pyrimidine metabolism; CTP biosynthesis via de novo pathway; UDP from UMP (UMPK route): step 1/1. With respect to regulation, allosterically activated by GTP. Inhibited by UTP. Its function is as follows. Catalyzes the reversible phosphorylation of UMP to UDP. This chain is Uridylate kinase, found in Aquifex aeolicus (strain VF5).